The following is a 507-amino-acid chain: MDSERDVRAQLQRAGQDHLLRFYADLAPEARAALLAELASLEADALREHCQRAAAAGALAPGPLPDLAARLQPLPPERVGSAIRCDQETRLRWEEEGFRQISLNKVAVLLLAGGQGTRLGVTYPKGMYQVGLPSQKTLYQLQAERIRRVQQLADQRQGTHCTVPWYIMTSEFTLGPTIKFFKEHDFFHLDPTNVVLFEQRMLPAVTFEGKAILERKDKVAMAPDGNGGLYCALADHQILEDMKQRGVEFVHVYCVDNILVRLADPVFIGFCVLQGADCGAKVVEKAYPEEPVGVVCQVDGVPQVVEYSEISPEIAGQLGADGGLLYNAGNICNHFFTRGFLDVVTREFEPLLRLHVAMKKVPYVDEEGNLVKPLRPNGIKMEKFVFDVFQFAKNFVAFEVCREEEFSPLKNDDTADRDNPSTCRRALLAQHYRWALQAGARFLDVHGVQLTEQSGMLPNGDPPAICEISPLVSYSGEGLEMYLQGRQLQSPFILDEDQARLLRPQDC.

The Substrate binding motif lies at 111–114; the sequence is LAGG. UTP contacts are provided by residues 111 to 114, Lys125, Gln199, and Gly225; that span reads LAGG. Asn226 serves as a coordination point for substrate. UTP is bound at residue Asp256. Residues 306–307 carry the Substrate binding motif; sequence EY. Lys380 contributes to the UTP binding site. Lys410 contacts substrate.

The protein belongs to the UDPGP type 1 family.

This chain is UDP-N-acetylhexosamine pyrophosphorylase-like protein 1 (Uap1l1), found in Mus musculus (Mouse).